Here is an 87-residue protein sequence, read N- to C-terminus: Mu-theraphotoxin-Cg1a (87 aa).

An N-terminal signal peptide occupies residues 1 to 21; the sequence is MKVLVLITLAVLGAMFVWTSA. The propeptide occupies 22–50; it reads AELEERGSDQRDSPAWVKSMERIFQSEER. 3 disulfide bridges follow: Cys-52–Cys-66, Cys-59–Cys-71, and Cys-65–Cys-79.

This sequence belongs to the neurotoxin 10 (Hwtx-1) family. 39 (Jztx-34) subfamily. Expressed by the venom gland.

It is found in the secreted. Potent and selective inhibitor of hNav1.7/SCN9A (IC(50)=610 nM). Also shows a weak activity towards Nav1.3/SCN3A (IC(50)=7950 nM). In addition, inhibits voltage-gated potassium channels (Kv) in rat DRG neurons. It does not alter the voltage dependence of activation, but it causes a small hyperpolarizing shift in the steady-state inactivations of Nav1.7/SNC9A. Chimera experiments show that the toxin binds to the DIIS3-S4 linker (site 4) of Nav1.7/SCN9A, whereas Nav1.7/SCN9A Asp-827 residue is shown by substitution experiments to be critical for its sensitivity. The toxin traps the domain II voltage sensor in the closed configuration, and not in an outward position. In vivo, shows analgesic activity in three rodent pain models (formalin-induced, acid-induced, and thermal). The polypeptide is Mu-theraphotoxin-Cg1a (Chilobrachys guangxiensis (Chinese earth tiger tarantula)).